Here is a 212-residue protein sequence, read N- to C-terminus: Ribonuclease P protein component 3 (212 aa).

The protein belongs to the eukaryotic/archaeal RNase P protein component 3 family. Consists of a catalytic RNA component and at least 4-5 protein subunits.

It localises to the cytoplasm. It catalyses the reaction Endonucleolytic cleavage of RNA, removing 5'-extranucleotides from tRNA precursor.. Functionally, part of ribonuclease P, a protein complex that generates mature tRNA molecules by cleaving their 5'-ends. The chain is Ribonuclease P protein component 3 from Pyrococcus abyssi (strain GE5 / Orsay).